Here is a 330-residue protein sequence, read N- to C-terminus: Cathepsin S (330 aa).

Positions 1–17 (MAVLGAPGVLCDNGATA) are cleaved as a signal peptide. Residues 18 to 112 (ERPTLDHHWD…GTLKSSSNQT (95 aa)) constitute a propeptide, activation peptide. Residues asparagine 100 and asparagine 110 are each glycosylated (N-linked (GlcNAc...) asparagine). Cystine bridges form between cysteine 124-cysteine 222, cysteine 134-cysteine 179, cysteine 168-cysteine 211, and cysteine 271-cysteine 319. Cysteine 137 is a catalytic residue. Residues histidine 277 and asparagine 297 contribute to the active site.

It belongs to the peptidase C1 family. In terms of assembly, monomer. Highest levels occur in the ileum followed by spleen, brain, thyroid, ovary and uterus. Low levels are found in the liver, kidney, jejunum and lung with lowest levels in the heart.

It localises to the lysosome. Its subcellular location is the secreted. The protein resides in the cytoplasmic vesicle. The protein localises to the phagosome. The catalysed reaction is Similar to cathepsin L, but with much less activity on Z-Phe-Arg-|-NHMec, and more activity on the Z-Val-Val-Arg-|-Xaa compound.. Its function is as follows. Thiol protease. Key protease responsible for the removal of the invariant chain from MHC class II molecules and MHC class II antigen presentation. The bond-specificity of this proteinase is in part similar to the specificities of cathepsin L. The chain is Cathepsin S (Ctss) from Rattus norvegicus (Rat).